Consider the following 218-residue polypeptide: UPF0598 protein C8orf82 homolog (218 aa).

This sequence belongs to the UPF0598 family.

This is UPF0598 protein C8orf82 homolog from Rattus norvegicus (Rat).